Here is a 31-residue protein sequence, read N- to C-terminus: Kappa-theraphotoxin-Ps1b (31 aa).

Disulfide bonds link Cys-2–Cys-16, Cys-9–Cys-21, and Cys-15–Cys-25. Residue Met-31 is modified to Methionine amide.

It belongs to the neurotoxin 30 (phrixotoxin) family. In terms of tissue distribution, expressed by the venom gland.

Its subcellular location is the secreted. Its function is as follows. Potent and specific blocker of Kv4.2/KCND2 (IC(50)=34 nM) and Kv4.3/KCND3 (IC(50)=71 nM) potassium channels. Acts by altering the gating properties of these channels. This Paraphysa scrofa (Chilean copper tarantula) protein is Kappa-theraphotoxin-Ps1b.